The following is a 206-amino-acid chain: Outer-membrane lipoprotein LolB (206 aa).

An N-terminal signal peptide occupies residues 1–18 (MSLLKNLLAPCLALLLAG). Cys19 carries N-palmitoyl cysteine lipidation. The S-diacylglycerol cysteine moiety is linked to residue Cys19.

Belongs to the LolB family. In terms of assembly, monomer.

The protein localises to the cell outer membrane. In terms of biological role, plays a critical role in the incorporation of lipoproteins in the outer membrane after they are released by the LolA protein. In Stutzerimonas stutzeri (strain A1501) (Pseudomonas stutzeri), this protein is Outer-membrane lipoprotein LolB.